The sequence spans 280 residues: Phosphatidylserine decarboxylase proenzyme (280 aa).

Catalysis depends on charge relay system; for autoendoproteolytic cleavage activity residues Asp-86, His-143, and Ser-246. Ser-246 acts as the Schiff-base intermediate with substrate; via pyruvic acid; for decarboxylase activity in catalysis. Ser-246 carries the post-translational modification Pyruvic acid (Ser); by autocatalysis.

Belongs to the phosphatidylserine decarboxylase family. PSD-B subfamily. Prokaryotic type I sub-subfamily. As to quaternary structure, heterodimer of a large membrane-associated beta subunit and a small pyruvoyl-containing alpha subunit. Requires pyruvate as cofactor. In terms of processing, is synthesized initially as an inactive proenzyme. Formation of the active enzyme involves a self-maturation process in which the active site pyruvoyl group is generated from an internal serine residue via an autocatalytic post-translational modification. Two non-identical subunits are generated from the proenzyme in this reaction, and the pyruvate is formed at the N-terminus of the alpha chain, which is derived from the carboxyl end of the proenzyme. The autoendoproteolytic cleavage occurs by a canonical serine protease mechanism, in which the side chain hydroxyl group of the serine supplies its oxygen atom to form the C-terminus of the beta chain, while the remainder of the serine residue undergoes an oxidative deamination to produce ammonia and the pyruvoyl prosthetic group on the alpha chain. During this reaction, the Ser that is part of the protease active site of the proenzyme becomes the pyruvoyl prosthetic group, which constitutes an essential element of the active site of the mature decarboxylase.

Its subcellular location is the cell membrane. The enzyme catalyses a 1,2-diacyl-sn-glycero-3-phospho-L-serine + H(+) = a 1,2-diacyl-sn-glycero-3-phosphoethanolamine + CO2. It functions in the pathway phospholipid metabolism; phosphatidylethanolamine biosynthesis; phosphatidylethanolamine from CDP-diacylglycerol: step 2/2. Functionally, catalyzes the formation of phosphatidylethanolamine (PtdEtn) from phosphatidylserine (PtdSer). This chain is Phosphatidylserine decarboxylase proenzyme, found in Brevibacillus brevis (strain 47 / JCM 6285 / NBRC 100599).